The sequence spans 124 residues: Small ribosomal subunit protein uS12 (124 aa).

Position 89 is a 3-methylthioaspartic acid (Asp-89).

The protein belongs to the universal ribosomal protein uS12 family. As to quaternary structure, part of the 30S ribosomal subunit. Contacts proteins S8 and S17. May interact with IF1 in the 30S initiation complex.

Its function is as follows. With S4 and S5 plays an important role in translational accuracy. Functionally, interacts with and stabilizes bases of the 16S rRNA that are involved in tRNA selection in the A site and with the mRNA backbone. Located at the interface of the 30S and 50S subunits, it traverses the body of the 30S subunit contacting proteins on the other side and probably holding the rRNA structure together. The combined cluster of proteins S8, S12 and S17 appears to hold together the shoulder and platform of the 30S subunit. The sequence is that of Small ribosomal subunit protein uS12 from Vibrio atlanticus (strain LGP32) (Vibrio splendidus (strain Mel32)).